We begin with the raw amino-acid sequence, 122 residues long: Phycocyanin PC645 alpha-2 subunit (122 aa).

The (2R,3E)-phycocyanobilin site is built by aspartate 54 and arginine 68. Residues cysteine 70, lysine 76, glutamate 77, and cysteine 92 each contribute to the mesobiliverdin site.

Belongs to the phycoerythrin family. As to quaternary structure, heterotetramer of 2 different alpha chains and 2 identical beta chains which form 2 alpha-beta heterodimers within the heterotetramer. Contains two phycocyanobilin chromophores and one mesobiliverdin chromophore with binding mediated by both the alpha and beta subunits.

The protein localises to the plastid. It is found in the chloroplast thylakoid membrane. Functionally, light-harvesting photosynthetic tetrapyrrole chromophore-protein from the phycobiliprotein complex. This chain is Phycocyanin PC645 alpha-2 subunit, found in Chroomonas sp. (strain CCMP270).